The following is a 1086-amino-acid chain: Isoleucine--tRNA ligase (1086 aa).

The 'HIGH' region motif lies at 53-63 (PFANGLPHYGH). Residues 624-628 (KLSKR) carry the 'KMSKS' region motif. K627 provides a ligand contact to ATP.

The protein belongs to the class-I aminoacyl-tRNA synthetase family. IleS type 2 subfamily. Monomer. Requires Zn(2+) as cofactor.

Its subcellular location is the cytoplasm. It carries out the reaction tRNA(Ile) + L-isoleucine + ATP = L-isoleucyl-tRNA(Ile) + AMP + diphosphate. Functionally, catalyzes the attachment of isoleucine to tRNA(Ile). As IleRS can inadvertently accommodate and process structurally similar amino acids such as valine, to avoid such errors it has two additional distinct tRNA(Ile)-dependent editing activities. One activity is designated as 'pretransfer' editing and involves the hydrolysis of activated Val-AMP. The other activity is designated 'posttransfer' editing and involves deacylation of mischarged Val-tRNA(Ile). This is Isoleucine--tRNA ligase from Rickettsia prowazekii (strain Madrid E).